The primary structure comprises 489 residues: MNLELLESFGQNYPEEFDGSLDCISLAVTCAFNKYGTLLAVGCNDGRIVIWDFLTRGIAKIISAHVHPVCSLSWTRNGHKLLSASTDNNVCIWDVLTGELEHKYRFPSPVLKVQFDPRNDNRLLVCPMRYAAVLVEVGGTHRCLPLDSDGDLNIVASFDRRGKHIYTGNAKGKILVLDVETFEVVASFRIIVGTSSATAVKSIEFARRGDAFLINTSDRVIRVYDSKEIITLGKDGEPEPIQKLQDLVNKTTWKKCCFSGDGEYICAGSARQHALYIWEKSIGNLVKILHGTKGELLLDVVWHPVRPIIASISSGLVSIWAQNQVENWSAFAPDFKELDENVEYEERESEFDIADEDKSVDLNADAQQDEEIEVDVQKVEPVAAFCSSDEEGEDENALQFLPMAPEVEDPEDGWTGQDGLEPSAVMLGHMEPHDYEDDIMASKRRRMQLYDVSLPDAPTDETHPLISSKASKDKQQPVGGKKAAGRTKK.

WD repeat units lie at residues 22–63, 64–103, 147–187, 195–234, 248–290, and 292–330; these read DCIS…KIIS, AHVH…LEHK, DSDG…VVAS, SSAT…TLGK, VNKT…KILH, and TKGE…NWSA. The tract at residues 451–489 is disordered; sequence DVSLPDAPTDETHPLISSKASKDKQQPVGGKKAAGRTKK.

In terms of assembly, core component of several methyltransferase-containing complexes. Component of the SET1 complex, composed at least of the catalytic subunit Set1, wds/WDR5, Wdr82, Rbbp5, ash2, Cfp1/CXXC1, hcf and Dpy-30L1. Component of the MLL3/4 complex composed at least of the catalytic subunit trr, ash2, Rbbp5, Dpy-30L1, wds, hcf, ptip, Pa1, Utx, Lpt and Ncoa6.

The protein localises to the nucleus. Functionally, component of the SET1 complex that specifically di- and trimethylates 'Lys-4' of histone H3 and of the MLL3/4 complex which also methylates histone H3 'Lys-4'. This chain is Retinoblastoma-binding protein 5 homolog, found in Drosophila melanogaster (Fruit fly).